Consider the following 351-residue polypeptide: Transmembrane protein 115 (351 aa).

The Cytoplasmic segment spans residues 1 to 19 (MQRALPGARQHLGAILASA). Positions 1-205 (MQRALPGARQ…FGLLSSWVYL (205 aa)) are mediates homooligomerization. The helical transmembrane segment at 20-40 (SVVVKALCAAVLFLYLLSFAV) threads the bilayer. The Lumenal portion of the chain corresponds to 41 to 97 (DTGCLAVTPGYLFPPNFWIWTLATHGLMEQHVWDVAISLTTVVVAGRLLEPLWGALE). Residues 98-118 (LLIFFSVVNVSVGLLGAFAYL) form a helical membrane-spanning segment. Over 119-126 (LTYMASFN) the chain is Cytoplasmic. The chain crosses the membrane as a helical span at residues 127–147 (LVYLFTVRIHGALGFLGGVLV). The Lumenal segment spans residues 148–165 (ALKQTMGDCVVLRVPQVR). Residues 166 to 186 (VSVMPMLLLALLLLLRLATLL) traverse the membrane as a helical segment. At 187-351 (QSPALASYGF…ITFEAAPPTL (165 aa)) the chain is on the cytoplasmic side. Residues 206–229 (RFYQRHSRGRGDMADHFAFATFFP) form a mediates localization to the Golgi region. Residues 301–351 (QSIWPSMDDDEEESGAKVDSPLPSDKAPTPPGKGAAPESSLITFEAAPPTL) form a disordered region. Residue Thr-329 is modified to Phosphothreonine.

Belongs to the TMEM115 family. In terms of assembly, homooligomer. Interacts with COPB1. May interact with LMAN1. Interacts with the COG complex; probably through COG3. Expressed strongly in kidney and skeletal muscle, followed by liver, placenta, pancreas, and lung, with low amounts in heart and only traces in brain. Widely expressed with ubiquitous expression in epithelial tissues (at protein level).

It is found in the golgi apparatus. The protein localises to the golgi stack membrane. Its function is as follows. May play a role in retrograde transport of proteins from the Golgi to the endoplasmic reticulum. May indirectly play a role in protein glycosylation in the Golgi. In Homo sapiens (Human), this protein is Transmembrane protein 115.